The primary structure comprises 351 residues: Phenylalanine--tRNA ligase alpha subunit (351 aa).

Glutamate 266 is a Mg(2+) binding site.

This sequence belongs to the class-II aminoacyl-tRNA synthetase family. Phe-tRNA synthetase alpha subunit type 1 subfamily. In terms of assembly, tetramer of two alpha and two beta subunits. Mg(2+) is required as a cofactor.

It is found in the cytoplasm. It carries out the reaction tRNA(Phe) + L-phenylalanine + ATP = L-phenylalanyl-tRNA(Phe) + AMP + diphosphate + H(+). The chain is Phenylalanine--tRNA ligase alpha subunit from Anaplasma marginale (strain St. Maries).